The primary structure comprises 307 residues: Small ribosomal subunit biogenesis GTPase RsgA (307 aa).

One can recognise a CP-type G domain in the interval 80-237 (KVDLRQAIVS…IVDTPGIKEF (158 aa)). GTP is bound by residues 129–132 (NKID) and 180–188 (GQSGVGKSS). Residues Cys261, Cys266, His268, and Cys274 each coordinate Zn(2+).

The protein belongs to the TRAFAC class YlqF/YawG GTPase family. RsgA subfamily. In terms of assembly, monomer. Associates with 30S ribosomal subunit, binds 16S rRNA. Zn(2+) serves as cofactor.

It localises to the cytoplasm. Functionally, one of several proteins that assist in the late maturation steps of the functional core of the 30S ribosomal subunit. Helps release RbfA from mature subunits. May play a role in the assembly of ribosomal proteins into the subunit. Circularly permuted GTPase that catalyzes slow GTP hydrolysis, GTPase activity is stimulated by the 30S ribosomal subunit. The protein is Small ribosomal subunit biogenesis GTPase RsgA of Borrelia garinii subsp. bavariensis (strain ATCC BAA-2496 / DSM 23469 / PBi) (Borreliella bavariensis).